A 550-amino-acid chain; its full sequence is Hydroxylamine reductase (550 aa).

The [2Fe-2S] cluster site is built by C3, C6, C18, and C25. Hybrid [4Fe-2O-2S] cluster-binding residues include H249, E273, C317, C405, C433, C458, E492, and K494. C405 is modified (cysteine persulfide).

This sequence belongs to the HCP family. [2Fe-2S] cluster is required as a cofactor. The cofactor is hybrid [4Fe-2O-2S] cluster.

The protein resides in the cytoplasm. It catalyses the reaction A + NH4(+) + H2O = hydroxylamine + AH2 + H(+). Functionally, catalyzes the reduction of hydroxylamine to form NH(3) and H(2)O. The sequence is that of Hydroxylamine reductase from Salmonella paratyphi A (strain ATCC 9150 / SARB42).